The chain runs to 113 residues: Venom protein 184 (113 aa).

Positions 1–21 (MKTTLIFCILGIVIPTAVVSS) are cleaved as a signal peptide.

Post-translationally, contains 3 disulfide bonds. As to expression, expressed by the venom gland.

Its subcellular location is the secreted. This chain is Venom protein 184, found in Lychas mucronatus (Chinese swimming scorpion).